The sequence spans 400 residues: Ribose-phosphate pyrophosphokinase 2, chloroplastic (400 aa).

A chloroplast-targeting transit peptide spans 1 to 44 (MASLALTSPPSVKIPSYLSSSSSSLFSRSSISFRTTESRSRICV). Aspartate 214, histidine 216, aspartate 225, and aspartate 229 together coordinate Mg(2+). Residues 300–315 (GKVAVMVDDIIDTAGT) are binding of phosphoribosylpyrophosphate.

This sequence belongs to the ribose-phosphate pyrophosphokinase family.

Its subcellular location is the plastid. The protein localises to the chloroplast. It catalyses the reaction D-ribose 5-phosphate + ATP = 5-phospho-alpha-D-ribose 1-diphosphate + AMP + H(+). The polypeptide is Ribose-phosphate pyrophosphokinase 2, chloroplastic (PRS2) (Arabidopsis thaliana (Mouse-ear cress)).